The chain runs to 421 residues: Alpha-1-antitrypsin (421 aa).

Positions 1–24 (MASSSTWGLLLLAGLCCLVPISLA) are cleaved as a signal peptide. N-linked (GlcNAc...) asparagine glycosylation is found at asparagine 73 and asparagine 110. The segment at 376–395 (GATILEAIPMSIPPNVKFNK) is RCL. The residue at position 386 (serine 386) is a Phosphoserine.

The protein belongs to the serpin family. Interacts with CELA2A. Interacts with ERGIC3 and LMAN1/ERGIC53. Interacts with PRSS1/Trypsin.

It localises to the secreted. In terms of biological role, inhibitor of serine proteases. Its primary target is elastase, but it also has a moderate affinity for plasmin and thrombin. The sequence is that of Alpha-1-antitrypsin (SERPINA1) from Sus scrofa (Pig).